We begin with the raw amino-acid sequence, 239 residues long: ATP-dependent dethiobiotin synthetase BioD (239 aa).

15-20 (EIGKTF) provides a ligand contact to ATP. Residue Thr-19 coordinates Mg(2+). Residue Lys-40 is part of the active site. Residues Asp-57, 118-121 (EGVG), and 178-179 (NH) each bind ATP. The Mg(2+) site is built by Asp-57 and Glu-118.

This sequence belongs to the dethiobiotin synthetase family. Homodimer. Mg(2+) serves as cofactor.

Its subcellular location is the cytoplasm. It carries out the reaction (7R,8S)-7,8-diammoniononanoate + CO2 + ATP = (4R,5S)-dethiobiotin + ADP + phosphate + 3 H(+). It participates in cofactor biosynthesis; biotin biosynthesis; biotin from 7,8-diaminononanoate: step 1/2. In terms of biological role, catalyzes a mechanistically unusual reaction, the ATP-dependent insertion of CO2 between the N7 and N8 nitrogen atoms of 7,8-diaminopelargonic acid (DAPA, also called 7,8-diammoniononanoate) to form a ureido ring. The chain is ATP-dependent dethiobiotin synthetase BioD from Burkholderia ambifaria (strain ATCC BAA-244 / DSM 16087 / CCUG 44356 / LMG 19182 / AMMD) (Burkholderia cepacia (strain AMMD)).